A 140-amino-acid chain; its full sequence is Nucleoside diphosphate kinase (140 aa).

The ATP site is built by Lys-11, Phe-59, Arg-87, Thr-93, Arg-104, and Asn-114. The Pros-phosphohistidine intermediate role is filled by His-117.

This sequence belongs to the NDK family. As to quaternary structure, homotetramer. Mg(2+) serves as cofactor.

It localises to the cytoplasm. It catalyses the reaction a 2'-deoxyribonucleoside 5'-diphosphate + ATP = a 2'-deoxyribonucleoside 5'-triphosphate + ADP. It carries out the reaction a ribonucleoside 5'-diphosphate + ATP = a ribonucleoside 5'-triphosphate + ADP. Major role in the synthesis of nucleoside triphosphates other than ATP. The ATP gamma phosphate is transferred to the NDP beta phosphate via a ping-pong mechanism, using a phosphorylated active-site intermediate. In Agrobacterium fabrum (strain C58 / ATCC 33970) (Agrobacterium tumefaciens (strain C58)), this protein is Nucleoside diphosphate kinase.